The sequence spans 453 residues: Endoglucanase A (453 aa).

A signal peptide spans Met1–Ser26. The active-site Nucleophile is the Asp82. A linker ('hinge') (Pro-Thr box) region spans residues Thr115–Pro126. The active site involves His417.

This sequence belongs to the glycosyl hydrolase 9 (cellulase E) family. In terms of assembly, monomer.

It localises to the periplasm. The enzyme catalyses Endohydrolysis of (1-&gt;4)-beta-D-glucosidic linkages in cellulose, lichenin and cereal beta-D-glucans.. High levels of endoglucanase activity detected on acid-swollen cellulose, ball-milled cellulose, and carboxymethyl cellulose; moderate levels detected on filter paper, phosphoric acid-swollen cellulose, lichenan, and xylan. This Fibrobacter succinogenes (Bacteroides succinogenes) protein is Endoglucanase A (endA).